The following is a 586-amino-acid chain: uncharacterized protein (586 aa).

In terms of domain architecture, ABC transmembrane type-1 spans 29-312; sequence YGIAIGSMVV…LARMRISLES (284 aa). 4 consecutive transmembrane segments (helical) span residues 30–50, 66–86, 162–184, and 256–276; these read GIAIGSMVVVAVMTSASAWIM, VFGVAVTVAIIFAVKGLATYV, MVIQQPLLSLVSAAVGPGAILGV, and IMETLSGFAIAGVIALSGVLV. Residues 346 to 580 enclose the ABC transporter domain; sequence IRFKDVNFSY…DGVYRRLYEL (235 aa). Residue 379–386 coordinates ATP; it reads GPSGAGKS.

The protein belongs to the ABC transporter superfamily.

It localises to the cell membrane. This is an uncharacterized protein from Sinorhizobium fredii (strain NBRC 101917 / NGR234).